The sequence spans 535 residues: NEDD8-activating enzyme E1 regulatory subunit (535 aa).

An interaction with UBA3 region spans residues 332–345 (DMIADSSKFIKLQN).

The protein belongs to the ubiquitin-activating E1 family. ULA1 subfamily. Heterodimer of UBA3 and NAE1. The complex binds NEDD8 and UBE2M.

Its pathway is protein modification; protein neddylation. Functionally, regulatory subunit of the dimeric UBA3-NAE1 E1 enzyme. E1 activates NEDD8 by first adenylating its C-terminal glycine residue with ATP, thereafter linking this residue to the side chain of the catalytic cysteine, yielding a NEDD8-UBA3 thioester and free AMP. E1 finally transfers NEDD8 to the catalytic cysteine of UBE2M. The covalent attachment of NEDD8 to target proteins is known as 'neddylation' and the process is involved in the regulation of cell growth, viability and development. The protein is NEDD8-activating enzyme E1 regulatory subunit (NAE1) of Gallus gallus (Chicken).